We begin with the raw amino-acid sequence, 1070 residues long: DNA-directed RNA polymerase subunit beta (1070 aa).

It belongs to the RNA polymerase beta chain family. As to quaternary structure, in plastids the minimal PEP RNA polymerase catalytic core is composed of four subunits: alpha, beta, beta', and beta''. When a (nuclear-encoded) sigma factor is associated with the core the holoenzyme is formed, which can initiate transcription.

Its subcellular location is the plastid. The protein resides in the chloroplast. The enzyme catalyses RNA(n) + a ribonucleoside 5'-triphosphate = RNA(n+1) + diphosphate. Functionally, DNA-dependent RNA polymerase catalyzes the transcription of DNA into RNA using the four ribonucleoside triphosphates as substrates. This is DNA-directed RNA polymerase subunit beta from Solanum bulbocastanum (Wild potato).